We begin with the raw amino-acid sequence, 259 residues long: uncharacterized protein (259 aa).

Glu-46 is an active-site residue.

It belongs to the PhzF family.

This is an uncharacterized protein from Pseudomonas aeruginosa (strain ATCC 15692 / DSM 22644 / CIP 104116 / JCM 14847 / LMG 12228 / 1C / PRS 101 / PAO1).